The sequence spans 77 residues: UPF0349 protein lmo2392 (77 aa).

Belongs to the UPF0349 family.

In Listeria monocytogenes serovar 1/2a (strain ATCC BAA-679 / EGD-e), this protein is UPF0349 protein lmo2392.